A 324-amino-acid polypeptide reads, in one-letter code: 33 kDa ribonucleoprotein, chloroplastic (324 aa).

The transit peptide at 1–71 (MSGCCFSFAA…YRSSIFLSTC (71 aa)) directs the protein to the chloroplast. RRM domains are found at residues 114–192 (GRLY…FPEV) and 217–296 (HKLY…AGQK). The tract at residues 294–324 (GQKAPVSSPPVVETSPENDSDNSELLSSLSS) is disordered. Low complexity predominate over residues 298-308 (PVSSPPVVETS).

Its subcellular location is the plastid. The protein localises to the chloroplast. Functionally, could be involved in splicing and/or processing of chloroplast RNA's. The polypeptide is 33 kDa ribonucleoprotein, chloroplastic (Nicotiana sylvestris (Wood tobacco)).